Here is a 534-residue protein sequence, read N- to C-terminus: Tyrosine-protein kinase Fyn (534 aa).

Gly-2 carries the N-myristoyl glycine lipid modification. 2 S-palmitoyl cysteine lipidation sites follow: Cys-3 and Cys-6. The residue at position 12 (Thr-12) is a Phosphothreonine; by PKC. Positions 15 to 39 (TDERDGSLTQSSGYRYGTDPTPQHY) are disordered. Residues 82–143 (TGVTLFEALY…PSNYVAPVDS (62 aa)) enclose the SH3 domain. In terms of domain architecture, SH2 spans 149-246 (WYFGKLGRKD…GLCFNLTVIA (98 aa)). A Protein kinase domain is found at 268–521 (LFLEQKLGQG…YLQGFLEDYF (254 aa)). ATP-binding positions include 274 to 282 (LGQGCFAEV) and Lys-296. Asp-387 acts as the Proton acceptor in catalysis. Residue Tyr-417 is modified to Phosphotyrosine; by autocatalysis. At Tyr-528 the chain carries Phosphotyrosine.

This sequence belongs to the protein kinase superfamily. Tyr protein kinase family. SRC subfamily. Associates through its SH3 domain, to the p85 subunit of phosphatidylinositol 3-kinase. Mn(2+) is required as a cofactor. Thymus and spleen.

The protein localises to the cytoplasm. The protein resides in the nucleus. It is found in the cell membrane. Its subcellular location is the perikaryon. It carries out the reaction L-tyrosyl-[protein] + ATP = O-phospho-L-tyrosyl-[protein] + ADP + H(+). With respect to regulation, inhibited by phosphorylation of Tyr-528 by leukocyte common antigen and activated by dephosphorylation of this site. Functionally, tyrosine-protein kinase implicated in the control of cell growth. Plays a role in the regulation of intracellular calcium levels. Required in brain development and mature brain function with important roles in the regulation of axon growth, axon guidance, and neurite extension. Role in CNTN1-mediated signaling. In Gallus gallus (Chicken), this protein is Tyrosine-protein kinase Fyn (FYN).